The sequence spans 332 residues: Ribosomal RNA small subunit methyltransferase H (332 aa).

S-adenosyl-L-methionine-binding positions include 42–44, Asp-62, Phe-86, Asp-105, and Gln-112; that span reads GGH.

Belongs to the methyltransferase superfamily. RsmH family.

It is found in the cytoplasm. It catalyses the reaction cytidine(1402) in 16S rRNA + S-adenosyl-L-methionine = N(4)-methylcytidine(1402) in 16S rRNA + S-adenosyl-L-homocysteine + H(+). Its function is as follows. Specifically methylates the N4 position of cytidine in position 1402 (C1402) of 16S rRNA. This chain is Ribosomal RNA small subunit methyltransferase H, found in Cupriavidus pinatubonensis (strain JMP 134 / LMG 1197) (Cupriavidus necator (strain JMP 134)).